The following is a 188-amino-acid chain: Phosphatidylinositol N-acetylglucosaminyltransferase subunit H (188 aa).

The protein belongs to the PIGH family. Component of the glycosylphosphatidylinositol-N-acetylglucosaminyltransferase (GPI-GnT) complex composed at least by PIGA, PIGC, PIGH, PIGP, PIGQ, PIGY and DPM2. Interacts with PIGQ.

The protein resides in the cytoplasm. The protein operates within glycolipid biosynthesis; glycosylphosphatidylinositol-anchor biosynthesis. Part of the glycosylphosphatidylinositol-N-acetylglucosaminyltransferase (GPI-GnT) complex that catalyzes the transfer of N-acetylglucosamine from UDP-N-acetylglucosamine to phosphatidylinositol and participates in the first step of GPI biosynthesis. This Mus musculus (Mouse) protein is Phosphatidylinositol N-acetylglucosaminyltransferase subunit H.